A 1128-amino-acid chain; its full sequence is DNA-directed RNA polymerase subunit Rpo2 (1128 aa).

DsDNA is bound by residues Lys-178, 181 to 182 (SN), Lys-206, 435 to 439 (RGQPN), and 1027 to 1032 (RFGEME). Zn(2+) contacts are provided by Cys-1061, Cys-1064, Cys-1079, and His-1082.

It belongs to the RNA polymerase beta chain family. In terms of assembly, part of the 13-subunit RNA polymerase complex. Zn(2+) serves as cofactor.

It is found in the cytoplasm. It carries out the reaction RNA(n) + a ribonucleoside 5'-triphosphate = RNA(n+1) + diphosphate. In terms of biological role, DNA-dependent RNA polymerase (RNAP) catalyzes the transcription of DNA into RNA using the four ribonucleoside triphosphates as substrates. This subunit is involved in DNA promoter recognition. This Saccharolobus shibatae (strain ATCC 51178 / DSM 5389 / JCM 8931 / NBRC 15437 / B12) (Sulfolobus shibatae) protein is DNA-directed RNA polymerase subunit Rpo2.